The chain runs to 470 residues: Aminodeoxychorismate synthase component 1 (470 aa).

It belongs to the anthranilate synthase component I family. Monomer. Heterodimer consisting of two non-identical subunits: a glutamine amidotransferase subunit (PabA) and a aminodeoxychorismate synthase subunit (PabB). It depends on Mg(2+) as a cofactor.

The catalysed reaction is chorismate + L-glutamine = 4-amino-4-deoxychorismate + L-glutamate. It participates in cofactor biosynthesis; tetrahydrofolate biosynthesis; 4-aminobenzoate from chorismate: step 1/2. Functionally, part of a heterodimeric complex that catalyzes the two-step biosynthesis of 4-amino-4-deoxychorismate (ADC), a precursor of p-aminobenzoate (PABA) and tetrahydrofolate. In the first step, a glutamine amidotransferase (PabA) generates ammonia as a substrate that, along with chorismate, is used in the second step, catalyzed by aminodeoxychorismate synthase (PabB) to produce ADC. The chain is Aminodeoxychorismate synthase component 1 (pabB) from Lactococcus lactis subsp. lactis (Streptococcus lactis).